A 664-amino-acid chain; its full sequence is Methionine--tRNA ligase (664 aa).

The 'HIGH' region motif lies at 15–25 (YYPSGKLHIGH). Residues 311 to 315 (KMSKS) carry the 'KMSKS' region motif. Residue Lys314 coordinates ATP. Residues 536–556 (MQGSAPAKEETKEEEPQEVDR) form a disordered region. In terms of domain architecture, tRNA-binding spans 570–662 (LRVAEVIEAE…IDQSLPKGTR (93 aa)).

Belongs to the class-I aminoacyl-tRNA synthetase family. MetG type 2B subfamily. In terms of assembly, homodimer.

It localises to the cytoplasm. It carries out the reaction tRNA(Met) + L-methionine + ATP = L-methionyl-tRNA(Met) + AMP + diphosphate. Functionally, is required not only for elongation of protein synthesis but also for the initiation of all mRNA translation through initiator tRNA(fMet) aminoacylation. The chain is Methionine--tRNA ligase (metG) from Bacillus subtilis (strain 168).